The chain runs to 211 residues: LexA repressor (211 aa).

A DNA-binding region (H-T-H motif) is located at residues 35–55 (RAEIANFFGFKSANAAEEHLK). Catalysis depends on for autocatalytic cleavage activity residues Ser-128 and Lys-165.

It belongs to the peptidase S24 family. As to quaternary structure, homodimer.

The enzyme catalyses Hydrolysis of Ala-|-Gly bond in repressor LexA.. Functionally, represses a number of genes involved in the response to DNA damage (SOS response), including recA and lexA. In the presence of single-stranded DNA, RecA interacts with LexA causing an autocatalytic cleavage which disrupts the DNA-binding part of LexA, leading to derepression of the SOS regulon and eventually DNA repair. The polypeptide is LexA repressor (Colwellia psychrerythraea (strain 34H / ATCC BAA-681) (Vibrio psychroerythus)).